A 317-amino-acid chain; its full sequence is Ribosomal RNA small subunit methyltransferase H (317 aa).

Residues Gly-39–His-41, Asp-59, Phe-83, Asp-104, and Gln-111 each bind S-adenosyl-L-methionine.

The protein belongs to the methyltransferase superfamily. RsmH family.

Its subcellular location is the cytoplasm. It catalyses the reaction cytidine(1402) in 16S rRNA + S-adenosyl-L-methionine = N(4)-methylcytidine(1402) in 16S rRNA + S-adenosyl-L-homocysteine + H(+). In terms of biological role, specifically methylates the N4 position of cytidine in position 1402 (C1402) of 16S rRNA. This Paraburkholderia phytofirmans (strain DSM 17436 / LMG 22146 / PsJN) (Burkholderia phytofirmans) protein is Ribosomal RNA small subunit methyltransferase H.